Consider the following 432-residue polypeptide: 3-phosphoshikimate 1-carboxyvinyltransferase (432 aa).

Residues Lys22, Ser23, and Arg27 each contribute to the 3-phosphoshikimate site. Lys22 is a binding site for phosphoenolpyruvate. Residues Gly96 and Arg127 each contribute to the phosphoenolpyruvate site. 7 residues coordinate 3-phosphoshikimate: Ser173, Ser174, Gln175, Ser201, Asp316, Asn339, and Lys343. Phosphoenolpyruvate is bound at residue Gln175. Asp316 serves as the catalytic Proton acceptor. Positions 347, 391, and 416 each coordinate phosphoenolpyruvate.

It belongs to the EPSP synthase family. In terms of assembly, monomer.

It is found in the cytoplasm. The enzyme catalyses 3-phosphoshikimate + phosphoenolpyruvate = 5-O-(1-carboxyvinyl)-3-phosphoshikimate + phosphate. It functions in the pathway metabolic intermediate biosynthesis; chorismate biosynthesis; chorismate from D-erythrose 4-phosphate and phosphoenolpyruvate: step 6/7. Catalyzes the transfer of the enolpyruvyl moiety of phosphoenolpyruvate (PEP) to the 5-hydroxyl of shikimate-3-phosphate (S3P) to produce enolpyruvyl shikimate-3-phosphate and inorganic phosphate. This Actinobacillus pleuropneumoniae serotype 5b (strain L20) protein is 3-phosphoshikimate 1-carboxyvinyltransferase.